Consider the following 586-residue polypeptide: Methionine--tRNA ligase, mitochondrial (586 aa).

Residues 1-46 (MLRQCARWVLTRTRFGRGCRRYGSCSPSASGDAGEARAYFTTPIFY) constitute a mitochondrion transit peptide. The 'HIGH' region signature appears at 45 to 55 (FYVNAAPHIGH). Positions 340-344 (KMSKS) match the 'KMSKS' region motif. Lysine 343 is a binding site for ATP.

Belongs to the class-I aminoacyl-tRNA synthetase family.

The protein localises to the mitochondrion matrix. It carries out the reaction tRNA(Met) + L-methionine + ATP = L-methionyl-tRNA(Met) + AMP + diphosphate. In Mus musculus (Mouse), this protein is Methionine--tRNA ligase, mitochondrial (Mars2).